The sequence spans 276 residues: Ribosomal RNA small subunit methyltransferase A (276 aa).

S-adenosyl-L-methionine-binding residues include Asn-27, Leu-29, Gly-54, Glu-75, Asp-101, and Asn-122.

This sequence belongs to the class I-like SAM-binding methyltransferase superfamily. rRNA adenine N(6)-methyltransferase family. RsmA subfamily.

The protein localises to the cytoplasm. It carries out the reaction adenosine(1518)/adenosine(1519) in 16S rRNA + 4 S-adenosyl-L-methionine = N(6)-dimethyladenosine(1518)/N(6)-dimethyladenosine(1519) in 16S rRNA + 4 S-adenosyl-L-homocysteine + 4 H(+). Its function is as follows. Specifically dimethylates two adjacent adenosines (A1518 and A1519) in the loop of a conserved hairpin near the 3'-end of 16S rRNA in the 30S particle. May play a critical role in biogenesis of 30S subunits. The sequence is that of Ribosomal RNA small subunit methyltransferase A from Brucella suis (strain ATCC 23445 / NCTC 10510).